Here is a 132-residue protein sequence, read N- to C-terminus: Small ribosomal subunit protein uS8 (132 aa).

Belongs to the universal ribosomal protein uS8 family. As to quaternary structure, part of the 30S ribosomal subunit. Contacts proteins S5 and S12.

One of the primary rRNA binding proteins, it binds directly to 16S rRNA central domain where it helps coordinate assembly of the platform of the 30S subunit. The chain is Small ribosomal subunit protein uS8 from Rhodopseudomonas palustris (strain HaA2).